The primary structure comprises 392 residues: DNA replication and repair protein RecF (392 aa).

Residue 30–37 (GPNAAGKT) coordinates ATP.

Belongs to the RecF family.

The protein localises to the cytoplasm. Functionally, the RecF protein is involved in DNA metabolism; it is required for DNA replication and normal SOS inducibility. RecF binds preferentially to single-stranded, linear DNA. It also seems to bind ATP. The chain is DNA replication and repair protein RecF from Chloroflexus aggregans (strain MD-66 / DSM 9485).